The primary structure comprises 199 residues: DnaJ homolog subfamily C member 5B (199 aa).

Ser-14 and Ser-16 each carry phosphoserine. The J domain occupies 19-84; the sequence is SLYEILGLHK…SKRNIYDKYG (66 aa).

Interacts with the chaperone complex consisting of HSC70 and SGTA. In terms of processing, palmitoylated.

The protein resides in the membrane. This chain is DnaJ homolog subfamily C member 5B (Dnajc5b), found in Mus musculus (Mouse).